A 230-amino-acid chain; its full sequence is Orotidine 5'-phosphate decarboxylase (230 aa).

Substrate-binding positions include Asp9, Lys31, 58–67 (DLKFFDIPNT), Thr120, Arg180, Gln188, Gly208, and Arg209. Lys60 functions as the Proton donor in the catalytic mechanism.

It belongs to the OMP decarboxylase family. Type 1 subfamily. As to quaternary structure, homodimer.

It catalyses the reaction orotidine 5'-phosphate + H(+) = UMP + CO2. The protein operates within pyrimidine metabolism; UMP biosynthesis via de novo pathway; UMP from orotate: step 2/2. Catalyzes the decarboxylation of orotidine 5'-monophosphate (OMP) to uridine 5'-monophosphate (UMP). The protein is Orotidine 5'-phosphate decarboxylase of Maridesulfovibrio salexigens (strain ATCC 14822 / DSM 2638 / NCIMB 8403 / VKM B-1763) (Desulfovibrio salexigens).